Reading from the N-terminus, the 55-residue chain is Large ribosomal subunit protein bL33 (55 aa).

The protein belongs to the bacterial ribosomal protein bL33 family.

This is Large ribosomal subunit protein bL33 from Acidothermus cellulolyticus (strain ATCC 43068 / DSM 8971 / 11B).